A 347-amino-acid polypeptide reads, in one-letter code: NADH-quinone oxidoreductase subunit H (347 aa).

Helical transmembrane passes span 13-33 (LIIALKSVVLLVVLLIVVAYL), 82-102 (GVFLLAPFIFAVLAMATWAVI), 115-135 (VGILYIFAISSLEVYGVIMGG), 161-181 (IGFVIVTVLLTVGSLNLTDIV), 198-218 (FLDWNWLCLFPMFVVFFISAL), 248-268 (FLLFFLGEYVAITLMCALMTV), 286-306 (VPGIIWFMLKLCFCFFLFAMV), and 325-345 (VFLPISLFMVVATATFLKVFG).

The protein belongs to the complex I subunit 1 family. In terms of assembly, NDH-1 is composed of 14 different subunits. Subunits NuoA, H, J, K, L, M, N constitute the membrane sector of the complex.

It is found in the cell inner membrane. It catalyses the reaction a quinone + NADH + 5 H(+)(in) = a quinol + NAD(+) + 4 H(+)(out). NDH-1 shuttles electrons from NADH, via FMN and iron-sulfur (Fe-S) centers, to quinones in the respiratory chain. The immediate electron acceptor for the enzyme in this species is believed to be ubiquinone. Couples the redox reaction to proton translocation (for every two electrons transferred, four hydrogen ions are translocated across the cytoplasmic membrane), and thus conserves the redox energy in a proton gradient. This subunit may bind ubiquinone. The polypeptide is NADH-quinone oxidoreductase subunit H (Brucella melitensis biotype 1 (strain ATCC 23456 / CCUG 17765 / NCTC 10094 / 16M)).